The chain runs to 177 residues: Large ribosomal subunit protein uL6 (177 aa).

It belongs to the universal ribosomal protein uL6 family. In terms of assembly, part of the 50S ribosomal subunit.

In terms of biological role, this protein binds to the 23S rRNA, and is important in its secondary structure. It is located near the subunit interface in the base of the L7/L12 stalk, and near the tRNA binding site of the peptidyltransferase center. In Pectobacterium carotovorum subsp. carotovorum (strain PC1), this protein is Large ribosomal subunit protein uL6.